A 261-amino-acid polypeptide reads, in one-letter code: Acetoacetate decarboxylase 2 (261 aa).

Lys-116 (schiff-base intermediate with acetoacetate) is an active-site residue.

This sequence belongs to the ADC family.

It carries out the reaction acetoacetate + H(+) = acetone + CO2. Functionally, catalyzes the conversion of acetoacetate to acetone and carbon dioxide. The chain is Acetoacetate decarboxylase 2 from Mesorhizobium japonicum (strain LMG 29417 / CECT 9101 / MAFF 303099) (Mesorhizobium loti (strain MAFF 303099)).